The following is a 301-amino-acid chain: Structure-specific endonuclease subunit SLX1 (301 aa).

Residues 12 to 95 (AFYCCYLLRS…QHPYQTRFIK (84 aa)) enclose the GIY-YIG domain. The SLX1-type zinc finger occupies 216 to 283 (CAICEKIVDY…IPTSGQCPNC (68 aa)).

The protein belongs to the SLX1 family. As to quaternary structure, forms a heterodimer with SLX4. Requires a divalent metal cation as cofactor.

It is found in the nucleus. Catalytic subunit of the SLX1-SLX4 structure-specific endonuclease that resolves DNA secondary structures generated during DNA repair and recombination. Has endonuclease activity towards branched DNA substrates, introducing single-strand cuts in duplex DNA close to junctions with ss-DNA. The polypeptide is Structure-specific endonuclease subunit SLX1 (Eremothecium gossypii (strain ATCC 10895 / CBS 109.51 / FGSC 9923 / NRRL Y-1056) (Yeast)).